Reading from the N-terminus, the 776-residue chain is Serine/threonine-protein kinase-like protein CCR2 (776 aa).

An N-terminal signal peptide occupies residues 1–22 (MQPNSHIFVIITISSLIITVSA). Residues 23-432 (YGSTGTIAAA…QKEQREVRRL (410 aa)) lie on the Extracellular side of the membrane. N-linked (GlcNAc...) asparagine glycosylation is found at N59, N92, N154, N162, N205, N278, N287, and N350. The TNFR-Cys repeat unit spans residues 341–396 (NCGDGWFAFNASILKESELTSLCSFHNLNICLRCGISCLEGYFPSSTCNPNADRVC). Intrachain disulfides connect C342-C371, C374-C388, and C378-C396. N404 carries N-linked (GlcNAc...) asparagine glycosylation. Residues 433–453 (VIIIGCSVLGFLVMLIGLSFI) form a helical membrane-spanning segment. The Cytoplasmic segment spans residues 454-776 (PKMTKGSKRD…DLIVKSGLTF (323 aa)). The 258-residue stretch at 519–776 (FKEFNELGRG…DLIVKSGLTF (258 aa)) folds into the Protein kinase domain. ATP-binding positions include 525–533 (LGRGSFGFV) and K547. Catalysis depends on D644, which acts as the Proton acceptor.

Belongs to the protein kinase superfamily. Ser/Thr protein kinase family. As to quaternary structure, homodimer. In terms of tissue distribution, expressed in roots, leaves, shoot apical meristems (SAM), and floral buds.

Its subcellular location is the membrane. It carries out the reaction L-seryl-[protein] + ATP = O-phospho-L-seryl-[protein] + ADP + H(+). The enzyme catalyses L-threonyl-[protein] + ATP = O-phospho-L-threonyl-[protein] + ADP + H(+). Serine/threonine-protein kinase with low activity. The polypeptide is Serine/threonine-protein kinase-like protein CCR2 (CCR2) (Arabidopsis thaliana (Mouse-ear cress)).